Consider the following 447-residue polypeptide: Mannose/glucose-specific lectin (447 aa).

Jacalin-type lectin domains are found at residues 5 to 148, 153 to 294, and 300 to 443; these read MISV…FVKP, TISF…YVKP, and SISI…FVKP.

It belongs to the jacalin lectin family. As to expression, expressed in seeds (at protein level).

With respect to regulation, hemagglutinating activity is slightly inhibited by alpha-methyl-D-mannopyranoside. In terms of biological role, D-mannose/D-glucose-binding lectin that also binds derivatives N-acetyl-D-glucosamine and alpha-methyl-D-mannopyranoside. Does not bind D-galactose, L-Rhamnose, D-fructose, lactose or glycoproteins fetiun and mucin. Shows agglutinating activity towards human and rabbit erythrocytes. Also displays antimicrobial activity against L.infantum. In Parkia pendula (Inga pendula), this protein is Mannose/glucose-specific lectin.